The following is a 189-amino-acid chain: HGPRTase-like protein 1 (189 aa).

It belongs to the purine/pyrimidine phosphoribosyltransferase family. Archaeal HPRT subfamily.

In terms of biological role, may catalyze a purine salvage reaction, the substrate is unknown. The polypeptide is HGPRTase-like protein 1 (Natrialba magadii (strain ATCC 43099 / DSM 3394 / CCM 3739 / CIP 104546 / IAM 13178 / JCM 8861 / NBRC 102185 / NCIMB 2190 / MS3) (Natronobacterium magadii)).